The primary structure comprises 40 residues: Sapecin-C (40 aa).

3 disulfide bridges follow: C3–C30, C16–C36, and C20–C38.

Belongs to the invertebrate defensin family. Type 1 subfamily. Hemocytes and fat body.

The protein resides in the secreted. Its function is as follows. Sapecins, which are potent bactericidal proteins, are produced in response to injury. Sapecin C is cytotoxic to Gram-positive bacteria. The protein is Sapecin-C of Sarcophaga peregrina (Flesh fly).